Consider the following 454-residue polypeptide: Growth/differentiation factor 9 (454 aa).

An N-terminal signal peptide occupies residues 1-24 (MARPNKFLLWFCCFAWLCFPISLG). Residues 25 to 319 (SQASGGEAQI…GRSSHHRHRR (295 aa)) constitute a propeptide that is removed on maturation. N-linked (GlcNAc...) asparagine glycosylation is found at Asn106, Asn163, Asn236, Asn255, and Asn268. Positions 303-330 (GEEAAEDGRSSHHRHRRGQETVSSELKK) are disordered. Ser325 is subject to Phosphoserine; by CK. Asn338 carries an N-linked (GlcNAc...) asparagine glycan. 3 disulfide bridges follow: Cys353-Cys419, Cys382-Cys451, and Cys386-Cys453.

It belongs to the TGF-beta family. As to quaternary structure, homodimer or heterodimer (Potential). But, in contrast to other members of this family, cannot be disulfide-linked. In terms of processing, phosphorylated; phosphorylation is critical for GDF9 function. In vitro, can be phosphorylated by CK at Ser-325. As to expression, expressed in ovarian granulosa cells. Present in oocytes of primary follicles (at protein level).

The protein resides in the secreted. Its function is as follows. Required for ovarian folliculogenesis. Promotes primordial follicle development. Stimulates granulosa cell proliferation. Promotes cell transition from G0/G1 to S and G2/M phases, through an increase of CCND1 and CCNE1 expression, and RB1 phosphorylation. It regulates STAR expression and cAMP-dependent progesterone release in granulosa and thecal cells. Attenuates the suppressive effects of activin A on STAR expression and progesterone production by increasing the expression of inhibin B. It suppresses FST and FSTL3 production in granulosa-lutein cells. The sequence is that of Growth/differentiation factor 9 (GDF9) from Homo sapiens (Human).